A 428-amino-acid chain; its full sequence is Spliceosome RNA helicase Ddx39b (428 aa).

Residues Met1 to Glu19 show a composition bias toward acidic residues. Residues Met1–Ala31 form a disordered region. N-acetylalanine is present on Ala2. Lys36 bears the N6-acetyllysine; alternate mark. Lys36 participates in a covalent cross-link: Glycyl lysine isopeptide (Lys-Gly) (interchain with G-Cter in SUMO2); alternate. Phosphoserine is present on residues Ser38 and Ser41. Positions Ser45–His73 match the Q motif motif. Positions Ile76–Ile249 constitute a Helicase ATP-binding domain. Position 89–96 (Ala89–Thr96) interacts with ATP. Phosphothreonine is present on Thr172. A DECD box motif is present at residues Asp196–Asp199. One can recognise a Helicase C-terminal domain in the interval Gly261–Ser422.

The protein belongs to the DEAD box helicase family. DECD subfamily. Homodimer, and heterodimer with DDX39A. DDX39B interacts with the THO subcomplex to form the THO-DDX39B complex which multimerizes into a 28-subunit tetrameric assembly. Component of the transcription/export (TREX) complex at least composed of ALYREF/THOC4, DDX39B, SARNP/CIP29, CHTOP and the THO subcomplex; in the complex interacts with THOC2. THOC1-THOC2-THOC3-DDX39B subcomplex is sufficient for the interaction with export factor NXF1-NXT1. TREX seems to have a dynamic structure involving ATP-dependent remodeling. Within the TREX complex bridges ALYREF/THOC4 and the THO subcomplex, and, in a ATP-dependent manner, ALYREF/THOC4 and SARNP/CIP29. Component of the spliceosome. Interacts directly with U2AF2. Interacts with RBM8A, RNPS1 and SRRM1, FYTTD1/UIF, THOC1, MX1 and POLDIP3. Interacts with LUZP4. Interacts with SARNP/CIP29 (via the C-terminal domain); the interaction is direct and facilitates RNA binding of DDX39B.

Its subcellular location is the nucleus. It localises to the nucleus speckle. The protein resides in the cytoplasm. The enzyme catalyses ATP + H2O = ADP + phosphate + H(+). Involved in nuclear export of spliced and unspliced mRNA. Component of the TREX complex which is thought to couple mRNA transcription, processing and nuclear export, and specifically associates with spliced mRNA and not with unspliced pre-mRNA. The TREX complex is recruited to spliced mRNAs by a transcription-independent mechanism, binds to mRNA upstream of the exon-junction complex (EJC) and is recruited in a splicing- and cap-dependent manner to a region near the 5' end of the mRNA where it functions in mRNA export to the cytoplasm via the TAP/NXF1 pathway. The THOC1-THOC2-THOC3 core complex alone is sufficient to promote ATPase activity of DDX39B; in the complex THOC2 is the only component that directly interacts with DDX39B. Associates with SARNP/CIP29, which facilitates RNA binding of DDX39B and likely plays a role in mRNA export. May undergo several rounds of ATP hydrolysis during assembly of TREX to drive subsequent loading of components such as ALYREF/THOC4 and CHTOP onto mRNA. Also associates with pre-mRNA independent of ALYREF/THOC4. Involved in the nuclear export of intronless mRNA; the ATP-bound form is proposed to recruit export adapter ALYREF/THOC4 to intronless mRNA; its ATPase activity is cooperatively stimulated by RNA and ALYREF/THOC4 and ATP hydrolysis is thought to trigger the dissociation from RNA to allow the association of ALYREF/THOC4 and the NXF1-NXT1 heterodimer. Involved in transcription elongation and genome stability. Its function is as follows. Splice factor that is required for the first ATP-dependent step in spliceosome assembly and for the interaction of U2 snRNP with the branchpoint. Has both RNA-stimulated ATP binding/hydrolysis activity and ATP-dependent RNA unwinding activity. Even with the stimulation of RNA, the ATPase activity is weak. Can only hydrolyze ATP but not other NTPs. The RNA stimulation of ATPase activity does not have a strong preference for the sequence and length of the RNA. However, ssRNA stimulates the ATPase activity much more strongly than dsRNA. Can unwind 5' or 3' overhangs or blunt end RNA duplexes in vitro. The ATPase and helicase activities are not influenced by U2AF2; the effect of ALYREF/THOC4 is reported conflictingly. The protein is Spliceosome RNA helicase Ddx39b (Ddx39b) of Mus musculus (Mouse).